The sequence spans 1309 residues: DNA repair protein RAD9 (1309 aa).

Over residues 1–19 (MSGQLVQWKSSPDRVTQSA) the composition is skewed to polar residues. A disordered region spans residues 1–39 (MSGQLVQWKSSPDRVTQSAIKEALHSPLADGDMNEMNVP). Residues Ser26, Ser56, and Ser205 each carry the phosphoserine modification. Thr218 bears the Phosphothreonine mark. Residue Ser248 is modified to Phosphoserine. The tract at residues 280–299 (NIGAIEEKNPVKKKSENYSS) is disordered. Residues 284 to 299 (IEEKNPVKKKSENYSS) are compositionally biased toward basic and acidic residues. Phosphoserine is present on residues Ser312 and Ser315. The interval 342-365 (NSAVSGTPSRNNAEEEMYSSESVN) is disordered. A compositionally biased stretch (polar residues) spans 343–352 (SAVSGTPSRN). At Ser462 the chain carries Phosphoserine. 2 positions are modified to phosphothreonine: Thr471 and Thr474. The disordered stretch occupies residues 490 to 512 (PETSSPSKNTMSKPSNSSPIPKE). Polar residues predominate over residues 491–508 (ETSSPSKNTMSKPSNSSP). Ser568 carries the post-translational modification Phosphoserine. Disordered stretches follow at residues 636–655 (KGNSLQLHDDNKECNSDKQD) and 691–731 (IIQN…NSDL). Residues 642 to 655 (LHDDNKECNSDKQD) are compositionally biased toward basic and acidic residues. Ser729 carries the post-translational modification Phosphoserine. A BRCT domain is found at 994 to 1122 (RTGNVFDKCI…RIVPHLIYQY (129 aa)).

In terms of assembly, physically associates with RAD53.

The protein resides in the nucleus. In terms of biological role, essential for cell cycle arrest at the G2 stage following DNA damage by X-irradiation or inactivation of DNA ligase. The protein is DNA repair protein RAD9 (RAD9) of Saccharomyces cerevisiae (strain ATCC 204508 / S288c) (Baker's yeast).